The following is a 161-amino-acid chain: MLKEFKEFALKGNVVDMAVGIIVGGAFGSIVNTLVSEVMMPPLGLLTGGVDFSNLYVVMKEGVEPGPYAALANARAAGAVTLNYGLFLNALVSFTIMAFSVFILVKAINRLRQKADAAPAPPSKKTCPYCLTLVPQQASRCPACTSELPGAADPGARVAAK.

Transmembrane regions (helical) follow at residues 14 to 34 (VVDMAVGIIVGGAFGSIVNTL) and 85 to 105 (GLFLNALVSFTIMAFSVFILV).

Belongs to the MscL family. In terms of assembly, homopentamer.

The protein localises to the cell inner membrane. Its function is as follows. Channel that opens in response to stretch forces in the membrane lipid bilayer. May participate in the regulation of osmotic pressure changes within the cell. The protein is Large-conductance mechanosensitive channel of Chlorobium luteolum (strain DSM 273 / BCRC 81028 / 2530) (Pelodictyon luteolum).